Here is an 82-residue protein sequence, read N- to C-terminus: Large ribosomal subunit protein bL27 (82 aa).

The disordered stretch occupies residues 1-26 (MAHKKGQGASRNGRDSESKRLGMKVG).

The protein belongs to the bacterial ribosomal protein bL27 family.

The chain is Large ribosomal subunit protein bL27 from Chlamydia felis (strain Fe/C-56) (Chlamydophila felis).